The primary structure comprises 213 residues: NADH-quinone oxidoreductase subunit C (213 aa).

This sequence belongs to the complex I 30 kDa subunit family. In terms of assembly, NDH-1 is composed of 14 different subunits. Subunits NuoB, C, D, E, F, and G constitute the peripheral sector of the complex.

It localises to the cell inner membrane. The enzyme catalyses a quinone + NADH + 5 H(+)(in) = a quinol + NAD(+) + 4 H(+)(out). Functionally, NDH-1 shuttles electrons from NADH, via FMN and iron-sulfur (Fe-S) centers, to quinones in the respiratory chain. The immediate electron acceptor for the enzyme in this species is believed to be ubiquinone. Couples the redox reaction to proton translocation (for every two electrons transferred, four hydrogen ions are translocated across the cytoplasmic membrane), and thus conserves the redox energy in a proton gradient. The sequence is that of NADH-quinone oxidoreductase subunit C from Rhodospirillum rubrum (strain ATCC 11170 / ATH 1.1.1 / DSM 467 / LMG 4362 / NCIMB 8255 / S1).